Reading from the N-terminus, the 320-residue chain is Eukaryotic translation initiation factor 3 subunit G (320 aa).

The tract at residues 1-25 (MPTGDFDSKPSWADQVEEEGEDDKC) is disordered. Ser8 and Ser11 each carry phosphoserine. 2 positions are modified to phosphothreonine: Thr38 and Thr41. A phosphoserine mark is found at Ser42, Ser189, Ser223, and Ser264. The tract at residues 209 to 234 (KTGKYVPPSLRDGASRRGESMQPNRR) is disordered. The span at 221 to 234 (GASRRGESMQPNRR) shows a compositional bias: basic and acidic residues. The 79-residue stretch at 239 to 317 (ATIRVTNLSE…LILNVEWAKP (79 aa)) folds into the RRM domain.

This sequence belongs to the eIF-3 subunit G family. Component of the eukaryotic translation initiation factor 3 (eIF-3) complex, which is composed of 13 subunits: EIF3A, EIF3B, EIF3C, EIF3D, EIF3E, EIF3F, EIF3G, EIF3H, EIF3I, EIF3J, EIF3K, EIF3L and EIF3M. The eIF-3 complex appears to include 3 stable modules: module A is composed of EIF3A, EIF3B, EIF3G and EIF3I; module B is composed of EIF3F, EIF3H, and EIF3M; and module C is composed of EIF3C, EIF3D, EIF3E, EIF3K and EIF3L. EIF3C of module C binds EIF3B of module A and EIF3H of module B, thereby linking the three modules. EIF3J is a labile subunit that binds to the eIF-3 complex via EIF3B. The eIF-3 complex interacts with RPS6KB1 under conditions of nutrient depletion. Mitogenic stimulation leads to binding and activation of a complex composed of FRAP1 and RAPTOR, leading to phosphorylation and release of RPS6KB1 and binding of EIF4B to eIF-3. Interacts (via C-terminus) with AIFM1 (via N-terminus). Interacts with DHX33; the interaction is independent of RNA. Phosphorylated. Phosphorylation is enhanced upon serum stimulation.

It is found in the cytoplasm. The protein localises to the nucleus. Its subcellular location is the perinuclear region. Its function is as follows. RNA-binding component of the eukaryotic translation initiation factor 3 (eIF-3) complex, which is required for several steps in the initiation of protein synthesis. The eIF-3 complex associates with the 40S ribosome and facilitates the recruitment of eIF-1, eIF-1A, eIF-2:GTP:methionyl-tRNAi and eIF-5 to form the 43S pre-initiation complex (43S PIC). The eIF-3 complex stimulates mRNA recruitment to the 43S PIC and scanning of the mRNA for AUG recognition. The eIF-3 complex is also required for disassembly and recycling of post-termination ribosomal complexes and subsequently prevents premature joining of the 40S and 60S ribosomal subunits prior to initiation. The eIF-3 complex specifically targets and initiates translation of a subset of mRNAs involved in cell proliferation, including cell cycling, differentiation and apoptosis, and uses different modes of RNA stem-loop binding to exert either translational activation or repression. This subunit can bind 18S rRNA. The chain is Eukaryotic translation initiation factor 3 subunit G from Bos taurus (Bovine).